Here is a 512-residue protein sequence, read N- to C-terminus: Cobyric acid synthase (512 aa).

The 201-residue stretch at 251 to 451 (ALDIAVIRLP…IHGLFDSHHF (201 aa)) folds into the GATase cobBQ-type domain. Residue cysteine 332 is the Nucleophile of the active site. Histidine 443 is an active-site residue.

It belongs to the CobB/CobQ family. CobQ subfamily.

The protein operates within cofactor biosynthesis; adenosylcobalamin biosynthesis. Functionally, catalyzes amidations at positions B, D, E, and G on adenosylcobyrinic A,C-diamide. NH(2) groups are provided by glutamine, and one molecule of ATP is hydrogenolyzed for each amidation. This is Cobyric acid synthase from Yersinia enterocolitica serotype O:8 / biotype 1B (strain NCTC 13174 / 8081).